The following is a 263-amino-acid chain: Large ribosomal subunit protein uL10m (263 aa).

A mitochondrion-targeting transit peptide spans 1 to 29; the sequence is MPFSVEVEVFFLLVEDKLGWLPTLQPVRH. The disordered stretch occupies residues 241-263; that stretch reads QHEGDCATSTEGKPHPPDPAPDS.

This sequence belongs to the universal ribosomal protein uL10 family. Component of the mitochondrial ribosome large subunit (39S) which comprises a 16S rRNA and about 50 distinct proteins.

It localises to the mitochondrion. The sequence is that of Large ribosomal subunit protein uL10m (Mrpl10) from Rattus norvegicus (Rat).